The sequence spans 98 residues: Serine rich endogenous peptide 10 (98 aa).

Positions 1 to 29 are cleaved as a signal peptide; sequence MERKKFSSKFIHLLIVFLLLCTFLSRTES. Positions 50–98 are disordered; the sequence is NSAIGTPSSTSDHAPGSNGRKLMSIYRPNGDIFTGPSGSGHGGGRTPAP. Residues 52-61 are compositionally biased toward polar residues; it reads AIGTPSSTSD. Short sequence motifs (SCOOP motif) lie at residues 52–66 and 80–94; these read AIGT…APGS and DIFT…GGGR. 2 consecutive short sequence motifs (sxS motif essential for MIK2 binding) follow at residues 58–60 and 86–88; these read STS and SGS. Residues 86–98 show a composition bias toward gly residues; it reads SGSGHGGGRTPAP.

This sequence belongs to the serine rich endogenous peptide (SCOOP) phytocytokine family. In terms of assembly, interacts with MIK2 (via extracellular leucine-rich repeat domain); this interaction triggers the formation of complex between MIK2 and the BAK1/SERK3 and SERK4 coreceptors, and subsequent BAK1 activation by phosphorylation. In terms of tissue distribution, mostly expressed in leaves and seedlings shoots, to a lower extent, in roots, but barely in flowers.

The protein localises to the cell membrane. It localises to the secreted. It is found in the extracellular space. The protein resides in the apoplast. Functionally, brassicaceae-specific phytocytokine (plant endogenous peptide released into the apoplast) perceived by MIK2 in a BAK1/SERK3 and SERK4 coreceptors-dependent manner, that modulates various physiological and antimicrobial processes including growth prevention and reactive oxygen species (ROS) response regulation. Inhibits root growth and regulates root meristems. Promotes ROS production and MAPK (e.g. MPK3, MPK4 and MPK6) activation in a MIK2-dependent manner, thus leading to the up-regulation of immune-related marker genes (e.g. WRKY30, WRKY33 and CYP81F2). The sequence is that of Serine rich endogenous peptide 10 from Arabidopsis thaliana (Mouse-ear cress).